The sequence spans 292 residues: 4-diphosphocytidyl-2-C-methyl-D-erythritol kinase (292 aa).

K20 is an active-site residue. 103 to 113 provides a ligand contact to ATP; that stretch reads PMGGGIGGGSS. The active site involves D145.

It belongs to the GHMP kinase family. IspE subfamily.

It carries out the reaction 4-CDP-2-C-methyl-D-erythritol + ATP = 4-CDP-2-C-methyl-D-erythritol 2-phosphate + ADP + H(+). The protein operates within isoprenoid biosynthesis; isopentenyl diphosphate biosynthesis via DXP pathway; isopentenyl diphosphate from 1-deoxy-D-xylulose 5-phosphate: step 3/6. Catalyzes the phosphorylation of the position 2 hydroxy group of 4-diphosphocytidyl-2C-methyl-D-erythritol. The chain is 4-diphosphocytidyl-2-C-methyl-D-erythritol kinase from Cupriavidus necator (strain ATCC 17699 / DSM 428 / KCTC 22496 / NCIMB 10442 / H16 / Stanier 337) (Ralstonia eutropha).